A 200-amino-acid polypeptide reads, in one-letter code: Large ribosomal subunit protein uL4 (200 aa).

The segment at Ala44–Gly70 is disordered.

It belongs to the universal ribosomal protein uL4 family. In terms of assembly, part of the 50S ribosomal subunit.

Functionally, one of the primary rRNA binding proteins, this protein initially binds near the 5'-end of the 23S rRNA. It is important during the early stages of 50S assembly. It makes multiple contacts with different domains of the 23S rRNA in the assembled 50S subunit and ribosome. Its function is as follows. Protein L4 is a both a transcriptional repressor and a translational repressor protein. It regulates transcription of the S10 operon (to which L4 belongs) by causing premature termination of transcription within the S10 leader. L4 controls the translation of the S10 operon by binding to its mRNA. This protein when expressed in E.coli represses both transcription and translation of the endogenous S10 operon. As the M.morganii S10 leader can be regulated in vitro by the E.coli L4 protein this strongly suggests the endogenous protein controls its own S10 operon in a similar fashion. In terms of biological role, forms part of the polypeptide exit tunnel. The protein is Large ribosomal subunit protein uL4 (rplD) of Morganella morganii (Proteus morganii).